The chain runs to 96 residues: Co-chaperonin GroES (96 aa).

It belongs to the GroES chaperonin family. As to quaternary structure, heptamer of 7 subunits arranged in a ring. Interacts with the chaperonin GroEL.

It localises to the cytoplasm. Functionally, together with the chaperonin GroEL, plays an essential role in assisting protein folding. The GroEL-GroES system forms a nano-cage that allows encapsulation of the non-native substrate proteins and provides a physical environment optimized to promote and accelerate protein folding. GroES binds to the apical surface of the GroEL ring, thereby capping the opening of the GroEL channel. The chain is Co-chaperonin GroES from Aliivibrio fischeri (strain ATCC 700601 / ES114) (Vibrio fischeri).